Here is a 156-residue protein sequence, read N- to C-terminus: D-aminoacyl-tRNA deacylase (156 aa).

Positions G137–P138 match the Gly-cisPro motif, important for rejection of L-amino acids motif.

The protein belongs to the DTD family. As to quaternary structure, homodimer.

It is found in the cytoplasm. The enzyme catalyses glycyl-tRNA(Ala) + H2O = tRNA(Ala) + glycine + H(+). It catalyses the reaction a D-aminoacyl-tRNA + H2O = a tRNA + a D-alpha-amino acid + H(+). An aminoacyl-tRNA editing enzyme that deacylates mischarged D-aminoacyl-tRNAs. Also deacylates mischarged glycyl-tRNA(Ala), protecting cells against glycine mischarging by AlaRS. Acts via tRNA-based rather than protein-based catalysis; rejects L-amino acids rather than detecting D-amino acids in the active site. By recycling D-aminoacyl-tRNA to D-amino acids and free tRNA molecules, this enzyme counteracts the toxicity associated with the formation of D-aminoacyl-tRNA entities in vivo and helps enforce protein L-homochirality. The sequence is that of D-aminoacyl-tRNA deacylase from Dictyoglomus turgidum (strain DSM 6724 / Z-1310).